The primary structure comprises 342 residues: D-erythrose-4-phosphate dehydrogenase (342 aa).

NAD(+) is bound at residue 11 to 12; it reads RI. Residues 153–155, Arg-199, 212–213, and Arg-235 each bind substrate; these read SCT and TK. Cys-154 serves as the catalytic Nucleophile. Asn-317 provides a ligand contact to NAD(+).

The protein belongs to the glyceraldehyde-3-phosphate dehydrogenase family. Epd subfamily. Homotetramer.

Its subcellular location is the cytoplasm. It carries out the reaction D-erythrose 4-phosphate + NAD(+) + H2O = 4-phospho-D-erythronate + NADH + 2 H(+). It participates in cofactor biosynthesis; pyridoxine 5'-phosphate biosynthesis; pyridoxine 5'-phosphate from D-erythrose 4-phosphate: step 1/5. Catalyzes the NAD-dependent conversion of D-erythrose 4-phosphate to 4-phosphoerythronate. The protein is D-erythrose-4-phosphate dehydrogenase of Shewanella denitrificans (strain OS217 / ATCC BAA-1090 / DSM 15013).